The sequence spans 329 residues: D-threo-aldose 1-dehydrogenase (329 aa).

Tyrosine 58 serves as the catalytic Proton donor. Substrate is bound at residue histidine 145.

This sequence belongs to the aldo/keto reductase family.

The enzyme catalyses a D-threo-aldose + NAD(+) = a D-threo-aldono-1,5-lactone + NADH + H(+). Inhibited strongly by Hg(2+), Cd(2+) and para-chloromercuribenzoic acid (PCMB) and weakly by Zn(2+) and iodoacetamide. Also inhibited strongly by L-xylose but not D-glucose. In terms of biological role, catalyzes the oxidation of L-fucose to L-fuconolactone in the presence of NADP(+). Also active against L-galactose and, to a much lesser degree, D-arabinose. Uses NADP(+) as a hydrogen acceptor much more efficiently than NAD(+). The sequence is that of D-threo-aldose 1-dehydrogenase from Pseudomonas sp.